We begin with the raw amino-acid sequence, 274 residues long: Methionine aminopeptidase B (274 aa).

Residue His-102 participates in substrate binding. The a divalent metal cation site is built by Asp-120, Asp-131, and His-194. Residue His-201 participates in substrate binding. A divalent metal cation contacts are provided by Glu-227 and Glu-258.

Belongs to the peptidase M24A family. Methionine aminopeptidase type 1 subfamily. As to quaternary structure, monomer. Requires Co(2+) as cofactor. The cofactor is Zn(2+). Mn(2+) is required as a cofactor. Fe(2+) serves as cofactor.

It catalyses the reaction Release of N-terminal amino acids, preferentially methionine, from peptides and arylamides.. Removes the N-terminal methionine from nascent proteins. The N-terminal methionine is often cleaved when the second residue in the primary sequence is small and uncharged (Met-Ala-, Cys, Gly, Pro, Ser, Thr, or Val). Requires deformylation of the N(alpha)-formylated initiator methionine before it can be hydrolyzed. This is Methionine aminopeptidase B from Synechocystis sp. (strain ATCC 27184 / PCC 6803 / Kazusa).